The chain runs to 235 residues: Small ribosomal subunit protein uS3 (235 aa).

The region spanning Ile39–Arg107 is the KH type-2 domain.

It belongs to the universal ribosomal protein uS3 family. As to quaternary structure, part of the 30S ribosomal subunit. Forms a tight complex with proteins S10 and S14.

In terms of biological role, binds the lower part of the 30S subunit head. Binds mRNA in the 70S ribosome, positioning it for translation. This Sphingopyxis alaskensis (strain DSM 13593 / LMG 18877 / RB2256) (Sphingomonas alaskensis) protein is Small ribosomal subunit protein uS3.